The sequence spans 161 residues: Large ribosomal subunit protein uL15 (161 aa).

The disordered stretch occupies residues 1-39 (MTKLNELAPREGSTKGRMRVGRGPGSGKGKTAGRGVKGQ). A compositionally biased stretch (gly residues) spans 22–36 (RGPGSGKGKTAGRGV).

This sequence belongs to the universal ribosomal protein uL15 family. As to quaternary structure, part of the 50S ribosomal subunit.

Functionally, binds to the 23S rRNA. The chain is Large ribosomal subunit protein uL15 from Caulobacter vibrioides (strain ATCC 19089 / CIP 103742 / CB 15) (Caulobacter crescentus).